A 375-amino-acid chain; its full sequence is Thioredoxin reductase 1, mitochondrial (375 aa).

The transit peptide at 1–37 (MNCVSRLKCLISKARSFARLGGESTLSQPPSLASAAF) directs the protein to the mitochondrion. Residues 58–61 (SGPA), 79–80 (FE), 87–92 (IAPGGQ), asparagine 101, valine 134, cysteine 192, aspartate 337, and 344–346 (RQA) contribute to the FAD site. A disulfide bridge links cysteine 189 with cysteine 192.

The protein belongs to the class-II pyridine nucleotide-disulfide oxidoreductase family. Homodimer. The cofactor is FAD. Ubiquitous.

It localises to the cytoplasm. Its subcellular location is the mitochondrion. It catalyses the reaction [thioredoxin]-dithiol + NADP(+) = [thioredoxin]-disulfide + NADPH + H(+). NADPH-dependent thioredoxin-disulfide reductase that reduces thioredoxins O1, O2 and F3. In Arabidopsis thaliana (Mouse-ear cress), this protein is Thioredoxin reductase 1, mitochondrial (NTR1).